A 347-amino-acid chain; its full sequence is Quinolinate synthase (347 aa).

The iminosuccinate site is built by histidine 47 and serine 68. Cysteine 113 provides a ligand contact to [4Fe-4S] cluster. Iminosuccinate-binding positions include 139–141 (YAN) and serine 156. Cysteine 200 provides a ligand contact to [4Fe-4S] cluster. Iminosuccinate contacts are provided by residues 226–228 (HPE) and threonine 243. Cysteine 297 contacts [4Fe-4S] cluster.

This sequence belongs to the quinolinate synthase family. Type 1 subfamily. [4Fe-4S] cluster serves as cofactor.

Its subcellular location is the cytoplasm. The enzyme catalyses iminosuccinate + dihydroxyacetone phosphate = quinolinate + phosphate + 2 H2O + H(+). Its pathway is cofactor biosynthesis; NAD(+) biosynthesis; quinolinate from iminoaspartate: step 1/1. Functionally, catalyzes the condensation of iminoaspartate with dihydroxyacetone phosphate to form quinolinate. This chain is Quinolinate synthase, found in Escherichia coli (strain K12 / MC4100 / BW2952).